Here is a 292-residue protein sequence, read N- to C-terminus: Cbb3-type cytochrome c oxidase subunit CcoP (292 aa).

Helical transmembrane passes span 11–31 (FGLIAALVILVLTIYESSSLI) and 62–82 (VGWIASFMCTIVWAFWYFFFG). Cytochrome c domains follow at residues 116 to 195 (ELVD…MAEI) and 205 to 288 (QLID…QSLK). 8 residues coordinate heme c: cysteine 129, cysteine 132, histidine 133, methionine 174, cysteine 219, cysteine 222, histidine 223, and methionine 264.

This sequence belongs to the CcoP / FixP family. As to quaternary structure, component of the cbb3-type cytochrome c oxidase at least composed of CcoN, CcoO, CcoQ and CcoP. Heme c serves as cofactor.

It localises to the cell inner membrane. It functions in the pathway energy metabolism; oxidative phosphorylation. Its function is as follows. C-type cytochrome. Part of the cbb3-type cytochrome c oxidase complex. CcoP subunit is required for transferring electrons from donor cytochrome c via its heme groups to CcoO subunit. From there, electrons are shuttled to the catalytic binuclear center of CcoN subunit where oxygen reduction takes place. The complex also functions as a proton pump. The chain is Cbb3-type cytochrome c oxidase subunit CcoP from Helicobacter pylori (Campylobacter pylori).